The sequence spans 179 residues: ATP synthase subunit delta (179 aa).

Belongs to the ATPase delta chain family. As to quaternary structure, F-type ATPases have 2 components, F(1) - the catalytic core - and F(0) - the membrane proton channel. F(1) has five subunits: alpha(3), beta(3), gamma(1), delta(1), epsilon(1). F(0) has three main subunits: a(1), b(2) and c(10-14). The alpha and beta chains form an alternating ring which encloses part of the gamma chain. F(1) is attached to F(0) by a central stalk formed by the gamma and epsilon chains, while a peripheral stalk is formed by the delta and b chains.

It is found in the cell inner membrane. Its function is as follows. F(1)F(0) ATP synthase produces ATP from ADP in the presence of a proton or sodium gradient. F-type ATPases consist of two structural domains, F(1) containing the extramembraneous catalytic core and F(0) containing the membrane proton channel, linked together by a central stalk and a peripheral stalk. During catalysis, ATP synthesis in the catalytic domain of F(1) is coupled via a rotary mechanism of the central stalk subunits to proton translocation. Functionally, this protein is part of the stalk that links CF(0) to CF(1). It either transmits conformational changes from CF(0) to CF(1) or is implicated in proton conduction. This Burkholderia cenocepacia (strain ATCC BAA-245 / DSM 16553 / LMG 16656 / NCTC 13227 / J2315 / CF5610) (Burkholderia cepacia (strain J2315)) protein is ATP synthase subunit delta.